We begin with the raw amino-acid sequence, 616 residues long: Bifunctional 2-aminoethylphosphonate cytidylyltransferase/aminotransferase (616 aa).

Residues 1 to 240 (MIKQAVILAG…VKNIYPHIVE (240 aa)) are 2-aminoethylphosphonate cytidylyltransferase. CMP-(2-aminoethyl)phosphonate-binding residues include L8, G10, G11, K25, T83, T88, E104, and S105. D106 and D136 together coordinate Mg(2+). Residues D136, K153, and E196 each coordinate CMP-(2-aminoethyl)phosphonate. The Mg(2+) site is built by E220 and D222. The tract at residues 250–616 (EVLLNPGPAT…EYMNGIGVGV (367 aa)) is 2-aminoethylphosphonate aminotransferase. Pyridoxal 5'-phosphate contacts are provided by S313, G314, T315, T390, K441, and T490.

In the N-terminal section; belongs to the LicC/PntC cytidylyltransferase family. This sequence in the C-terminal section; belongs to the class-V pyridoxal-phosphate-dependent aminotransferase family. PhnW subfamily. Homodimer. Mg(2+) serves as cofactor. Requires Zn(2+) as cofactor. It depends on pyridoxal 5'-phosphate as a cofactor.

It carries out the reaction (2-aminoethyl)phosphonate + CTP = CMP-(2-aminoethyl)phosphonate + diphosphate. The enzyme catalyses (2-aminoethyl)phosphonate + pyruvate = phosphonoacetaldehyde + L-alanine. Its pathway is phosphorus metabolism; phosphonate biosynthesis. Cytidylyltransferase activity is inhibited in the presence of EDTA and is restored by the addition of Mg(2+) or Zn(2+). Its function is as follows. Bifunctional transferase involved in the biosynthesis of cell-surface phosphonates. The aminotransferase region catalyzes the transformation of phosphonoacetaldehyde (PnAA) to 2-aminoethylphosphonate (AEP). The cytidylyltransferase region catalyzes the activation of 2-aminoethylphosphonate (AEP) to CMP-2-aminoethylphosphonate (CMP-AEP). Cannot use phosphocholine. Exhibits strong activity towards CTP, limited activity towards ATP and no activity with GTP. This Treponema denticola (strain ATCC 35405 / DSM 14222 / CIP 103919 / JCM 8153 / KCTC 15104) protein is Bifunctional 2-aminoethylphosphonate cytidylyltransferase/aminotransferase.